The following is a 178-amino-acid chain: ATP synthase subunit b (178 aa).

The helical transmembrane segment at 11 to 31 (IIPEPVEIVVGLVAFLLLLFV) threads the bilayer.

Belongs to the ATPase B chain family. F-type ATPases have 2 components, F(1) - the catalytic core - and F(0) - the membrane proton channel. F(1) has five subunits: alpha(3), beta(3), gamma(1), delta(1), epsilon(1). F(0) has three main subunits: a(1), b(2) and c(10-14). The alpha and beta chains form an alternating ring which encloses part of the gamma chain. F(1) is attached to F(0) by a central stalk formed by the gamma and epsilon chains, while a peripheral stalk is formed by the delta and b chains.

It localises to the cell membrane. Functionally, f(1)F(0) ATP synthase produces ATP from ADP in the presence of a proton or sodium gradient. F-type ATPases consist of two structural domains, F(1) containing the extramembraneous catalytic core and F(0) containing the membrane proton channel, linked together by a central stalk and a peripheral stalk. During catalysis, ATP synthesis in the catalytic domain of F(1) is coupled via a rotary mechanism of the central stalk subunits to proton translocation. Component of the F(0) channel, it forms part of the peripheral stalk, linking F(1) to F(0). This is ATP synthase subunit b from Saccharopolyspora erythraea (strain ATCC 11635 / DSM 40517 / JCM 4748 / NBRC 13426 / NCIMB 8594 / NRRL 2338).